A 217-amino-acid chain; its full sequence is Nucleoside diphosphate kinase homolog 5 (217 aa).

Positions 18 to 151 (ERTLALIKPD…REIRFMFPHS (134 aa)) are NDK.

This sequence belongs to the NDK family.

It is found in the cell projection. The protein resides in the cilium. Its function is as follows. Functions as part of axonemal radial spoke complexes that play an important part in the motility of sperm and cilia. Does not seem to have nucleoside diphosphate kinase (NDPK) activity. Exhibits a 3'-5' exonuclease activity with a preference for single-stranded DNA, suggesting roles in DNA proofreading and repair. The sequence is that of Nucleoside diphosphate kinase homolog 5 (nme5) from Danio rerio (Zebrafish).